Reading from the N-terminus, the 192-residue chain is Putative acetyltransferase YjbC (192 aa).

The region spanning 1 to 139 is the N-acetyltransferase domain; that stretch reads MNWYEKLSEY…MEILYWSPKT (139 aa).

It is found in the cytoplasm. This chain is Putative acetyltransferase YjbC (yjbC), found in Bacillus subtilis (strain 168).